Reading from the N-terminus, the 207-residue chain is Alpha-1-acid glycoprotein 8 (207 aa).

The first 18 residues, 1–18 (MALHTVLIMLSLLPMLEA), serve as a signal peptide directing secretion. N-linked (GlcNAc...) asparagine glycosylation is found at N25, N34, N76, N94, and N104. An intrachain disulfide couples C91 to C184.

It belongs to the calycin superfamily. Lipocalin family. Expressed by the liver and secreted in plasma.

It localises to the secreted. Functions as a transport protein in the blood stream. Binds various ligands in the interior of its beta-barrel domain. Appears to function in modulating the activity of the immune system during the acute-phase reaction. The chain is Alpha-1-acid glycoprotein 8 (Orm8) from Mus caroli (Ryukyu mouse).